We begin with the raw amino-acid sequence, 167 residues long: Shikimate kinase (167 aa).

12-17 provides a ligand contact to ATP; the sequence is GSGKTT. T16 serves as a coordination point for Mg(2+). Substrate-binding residues include D34, R58, and G80. R117 is a binding site for ATP. R135 lines the substrate pocket. Position 152 (R152) interacts with ATP.

The protein belongs to the shikimate kinase family. Monomer. Mg(2+) serves as cofactor.

It localises to the cytoplasm. It catalyses the reaction shikimate + ATP = 3-phosphoshikimate + ADP + H(+). Its pathway is metabolic intermediate biosynthesis; chorismate biosynthesis; chorismate from D-erythrose 4-phosphate and phosphoenolpyruvate: step 5/7. Its function is as follows. Catalyzes the specific phosphorylation of the 3-hydroxyl group of shikimic acid using ATP as a cosubstrate. In Salinispora arenicola (strain CNS-205), this protein is Shikimate kinase.